The sequence spans 962 residues: MTKQTLTQLEQHDLFLRRHIGPDSNQQQAMLNFVGAESLEDLTAQIVPESIRLSQDLSIGDSCGEAEGIAYIRGLADQNQVFKSYIGMGYYGTQVPNVILRNVFENPGWYTAYTPYQPEIAQGRLEAILNFQQVSMDLTGLDLASASLLDEATAAAEAMALAKRVSKAKKANIFFVADDVFPQTLDVVKTRAECFGFEVVVGPASEAVNYELFGALFQYTNRFGQITDFTELFATLRAKNVIVTVAADIMSLVLLKSPGSMGADVVFGSAQRFGVPMGFGGPHAAFFVARDEHKRSMPGRIIGVSKDARGNRALRMAMQTREQHIRREKANSNICTAQILLANMASFYAVFHGPDGLKTIASRINRFADILAAGLQAKGVSLVNSTWFDTISIKGLDVAAVNARALAAEMNLRFDTDGTVGISLDETTLRTDIDALFDVILGAGHGLDVAALDAQIVSQGSQSIPAALVRQDAILSHPTFNRYQSETEMMRYIKRLESKDLALNYSMISLGSCTMKLNAAVEMLPVSWPEFANMHPFSPLDQAKGYTQLIEELSTWLVNITGYDAVCIQPNSGAQGEYAGLLAIKKYHESRGDAHRNICLIPQSAHGTNPASAQLAGMQVVVTACDKQGNVDLEDLKTKAAEVAENLSCIMITYPSTHGVYEESIREICDIVHQHGGQVYLDGANMNAQVGLTSPGFIGADVSHLNLHKTFAIPHGGGGPGMGPIGVKSHLAPFVAGHVVVKPGRESDHNGAVSAAPYGSAGILPISWMYIKLLGSQGLKKSTQTALLNANYVMKKLSEHYPVLFRGRNDRVAHECIIDLRPLKEASGVTEMDIAKRLNDYGFHAPTMSFPVAGTLMIEPTESESKVELDRFIDAMVSIRAEIAKVESGEWPVDNNPLHNAPHTMADIMDPEFDTRPYSREVAVFPSAAVRTNKFWPTVNRIDDVYGDRNLMCSCAPLSDYE.

Lys-709 is modified (N6-(pyridoxal phosphate)lysine).

The protein belongs to the GcvP family. The glycine cleavage system is composed of four proteins: P, T, L and H. The cofactor is pyridoxal 5'-phosphate.

It catalyses the reaction N(6)-[(R)-lipoyl]-L-lysyl-[glycine-cleavage complex H protein] + glycine + H(+) = N(6)-[(R)-S(8)-aminomethyldihydrolipoyl]-L-lysyl-[glycine-cleavage complex H protein] + CO2. Functionally, the glycine cleavage system catalyzes the degradation of glycine. The P protein binds the alpha-amino group of glycine through its pyridoxal phosphate cofactor; CO(2) is released and the remaining methylamine moiety is then transferred to the lipoamide cofactor of the H protein. The sequence is that of Glycine dehydrogenase (decarboxylating) from Shewanella baltica (strain OS195).